Reading from the N-terminus, the 406-residue chain is MSLRIILKRDFSQCIRVFESGIKSSTTTTSNRFQAQYGNKNNDNTKRNTNNGNRFHNKYNNESRRSYPKTKYQQQYQQRKQPYIIDPRKIKFNNGTESARNAIEEIINRIYKLQKNYQIQLITNSGLKNYHLSEILQNLDLSINGLQLIDKSTSTTTTTTTTTTNNGGNELPLIKIITVREMINQYSTYLNNLKQLELIKLGSLKTLKTLDIKLKLEQKKSTTKEILIKWSINNNDFKLQKTNEIKKLIGNGNGGKNFLINMVYNKRNINKSIDTIYKYQCKGDEIEEKNLIEIELQRRQLLINNLQSLLTELNCKWIIEGDINTKMTFNVTPSISQSTTTTTTQEQEQEDYNDIEEKKLNRTERKKRKSQQQQQQQQQQQSKTNTTKKDEDEEDLDALYSFKIED.

A mitochondrion-targeting transit peptide spans 1-18; that stretch reads MSLRIILKRDFSQCIRVF. Disordered stretches follow at residues 29 to 79 and 335 to 406; these read TSNR…YQQR and ISQS…KIED. 3 stretches are compositionally biased toward low complexity: residues 38–54, 69–79, and 371–385; these read GNKN…NGNR, KTKYQQQYQQR, and QQQQ…SKTN.

This sequence belongs to the AIM23 family.

The protein resides in the mitochondrion. The polypeptide is Altered inheritance of mitochondria protein 23, mitochondrial (AIM23) (Candida dubliniensis (strain CD36 / ATCC MYA-646 / CBS 7987 / NCPF 3949 / NRRL Y-17841) (Yeast)).